The chain runs to 1419 residues: L-2-aminoadipate reductase (1419 aa).

The Carrier domain maps to 880–956; sequence ETLTATERDI…GLAKEIERMK (77 aa). O-(pantetheine 4'-phosphoryl)serine is present on Ser-916.

Belongs to the ATP-dependent AMP-binding enzyme family. The cofactor is pantetheine 4'-phosphate.

It is found in the cytoplasm. It carries out the reaction (S)-2-amino-6-oxohexanoate + NADP(+) + H2O = L-2-aminoadipate + NADPH + 2 H(+). The catalysed reaction is (S)-2-amino-6-oxohexanoate + NAD(+) + H2O = L-2-aminoadipate + NADH + 2 H(+). The enzyme catalyses (S)-2-amino-6-oxohexanoate + AMP + diphosphate + NADP(+) = L-2-aminoadipate + ATP + NADPH + H(+). Its pathway is amino-acid biosynthesis; L-lysine biosynthesis via AAA pathway; L-lysine from L-alpha-aminoadipate (fungal route): step 1/3. Functionally, catalyzes the activation of alpha-aminoadipate by ATP-dependent adenylation and the reduction of activated alpha-aminoadipate by NADPH. The activated alpha-aminoadipate is bound to the phosphopantheinyl group of the enzyme itself before it is reduced to (S)-2-amino-6-oxohexanoate. This is L-2-aminoadipate reductase (lys1) from Schizosaccharomyces pombe (strain 972 / ATCC 24843) (Fission yeast).